The primary structure comprises 554 residues: Trichloroethene reductive dehalogenase (554 aa).

Residues 1–42 constitute a signal peptide (tat-type signal); the sequence is MSEKYHSTVTRRDFMKRLGLAGAGAGALGAAVLAENNLPHEF. 2 consecutive 4Fe-4S ferredoxin-type domains span residues 425–457 and 471–500; these read PTKP…HEGP and EGWH…NNSW. 8 residues coordinate [4Fe-4S] cluster: Cys-437, Cys-440, Cys-443, Cys-447, Cys-480, Cys-483, Cys-486, and Cys-490.

This sequence belongs to the PceA family. [4Fe-4S] cluster is required as a cofactor. Corrinoid serves as cofactor. In terms of processing, predicted to be exported by the Tat system. The position of the signal peptide cleavage has been experimentally proven.

The protein localises to the cell membrane. It catalyses the reaction trichloroethene + AH2 = (Z)-1,2-dichloroethene + chloride + A + H(+). It carries out the reaction (Z)-1,2-dichloroethene + AH2 = chloroethene + chloride + A + H(+). The enzyme catalyses 1,1-dichloroethene + AH2 = chloroethene + chloride + A + H(+). Loses 93% of its activity upon incubation with 1-iodopropane and titanium(III) citrate in the dark. Subsequent exposure to light restores 80% of the original activity. Completely inhibited by 2 mM sodium sulfite or sodium dithionite, and by 1 mM cuprous chloride. Its function is as follows. Catalyzes the reductive dechlorination of trichloroethene (TCE) to cis-1,2-dichloroethene (DCE) and of cis-1,2-dichloroethene to chloroethene. The substrate specificity is broad, and the enzyme can dehalogenate various substrates, including 1,1-dichloroethene (1,1-DCE), 1,2-dichloroethane and 1,2-dibromoethane. A variety of other haloalkanes and haloalkenes containing three to five carbon atoms are dehalogenated at lower rates. Trans-1,2-dichloroethene (trans-DCE) and chloroethene are degraded at rates which are approximately 2 orders of magnitude lower. Titanium(III) citrate and methyl viologen can be used as reductants. This Dehalococcoides mccartyi (strain ATCC BAA-2266 / KCTC 15142 / 195) (Dehalococcoides ethenogenes (strain 195)) protein is Trichloroethene reductive dehalogenase.